Here is an 832-residue protein sequence, read N- to C-terminus: MALKLVLMLMVALLAAVWSPPAVTASVTYDHKSVIINGQRRILISGSIHYPRSTPEMWPDLIQKAKDGGLDVIQTYVFWNGHEPSPGQYYFGGRYDLVRFLKLVKQAGLYAHLRIGPYVCAEWNFGGFPVWLKYVPGIHFRTDNGPFKAAMGKFTEKIVSMMKAEGLYETQGGPIILSQIENEYGPVEYYDGAAGKSYTNWAAKMAVGLNTGVPWVMCKQDDAPDPVINTCNGFYCDYFSPNKDNKPKMWTEAWTGWFTGFGGAVPQRPAEDMAFAVARFIQKGGSFINYYMYHGGTNFGRTAGGPFISTSYDYDAPIDEYGLLRQPKWGHLRDLHKAIKLCEPALVSGEPTITSLGQNQESYVYRSKSSCAAFLANFNSRYYATVTFNGMHYNLPPWSVSILPDCKTTVFNTARVGAQTTTMKMQYLGGFSWKAYTEDTDALNDNTFTKDGLVEQLSTTWDRSDYLWYTTYVDIAKNEEFLKTGKYPYLTVMSAGHAVHVFINGQLSGTAYGSLDNPKLTYSGSAKLWAGSNKISILSVSVGLPNVGNHFETWNTGVLGPVTLTGLNEGKRDLSLQKWTYQIGLHGETLSLHSLTGSSNVEWGEASQKQPLTWYKTFFNAPPGNEPLALDMNTMGKGQIWINGQSIGRYWPAYKASGSCGSCDYRGTYNEKKCLSNCGEASQRWYHVPRSWLIPTGNFLVVLEEWGGDPTGISMVKRSVASVCAEVEELQPTMDNWRTKAYGRPKVHLSCDPGQKMSKIKFASFGTPQGTCGSFSEGSCHAHKSYDAFEQEGLMQNCVGQEFCSVNVAPEVFGGDPCPGTMKKLAVEAICE.

Residues 1 to 25 (MALKLVLMLMVALLAAVWSPPAVTA) form the signal peptide. Catalysis depends on glutamate 183, which acts as the Proton donor. Glutamate 252 serves as the catalytic Nucleophile. The SUEL-type lectin domain maps to 741–832 (AYGRPKVHLS…KKLAVEAICE (92 aa)).

It belongs to the glycosyl hydrolase 35 family.

It is found in the secreted. The protein resides in the extracellular space. The protein localises to the apoplast. It carries out the reaction Hydrolysis of terminal non-reducing beta-D-galactose residues in beta-D-galactosides.. The chain is Beta-galactosidase from Asparagus officinalis (Garden asparagus).